We begin with the raw amino-acid sequence, 347 residues long: Probable arabinogalactan endo-beta-1,4-galactanase A (347 aa).

The signal sequence occupies residues 1–16 (MLFSYLLATLPLLANA). The Proton donor role is filled by E150. Residue E260 is the Nucleophile of the active site.

The protein belongs to the glycosyl hydrolase 53 family.

It is found in the secreted. The catalysed reaction is The enzyme specifically hydrolyzes (1-&gt;4)-beta-D-galactosidic linkages in type I arabinogalactans.. In terms of biological role, endogalactanase involved in the degradation of plant cell wall polysaccharides, and more particularly of hairy regions of pectin. The protein is Probable arabinogalactan endo-beta-1,4-galactanase A (galA) of Aspergillus oryzae (strain ATCC 42149 / RIB 40) (Yellow koji mold).